Reading from the N-terminus, the 403-residue chain is Phosphopentomutase (403 aa).

6 residues coordinate Mn(2+): aspartate 13, aspartate 298, histidine 303, aspartate 339, histidine 340, and histidine 351.

It belongs to the phosphopentomutase family. The cofactor is Mn(2+).

The protein resides in the cytoplasm. The catalysed reaction is 2-deoxy-alpha-D-ribose 1-phosphate = 2-deoxy-D-ribose 5-phosphate. It catalyses the reaction alpha-D-ribose 1-phosphate = D-ribose 5-phosphate. The protein operates within carbohydrate degradation; 2-deoxy-D-ribose 1-phosphate degradation; D-glyceraldehyde 3-phosphate and acetaldehyde from 2-deoxy-alpha-D-ribose 1-phosphate: step 1/2. Isomerase that catalyzes the conversion of deoxy-ribose 1-phosphate (dRib-1-P) and ribose 1-phosphate (Rib-1-P) to deoxy-ribose 5-phosphate (dRib-5-P) and ribose 5-phosphate (Rib-5-P), respectively. In Streptococcus thermophilus (strain ATCC BAA-491 / LMD-9), this protein is Phosphopentomutase.